Here is a 242-residue protein sequence, read N- to C-terminus: Biosynthetic peptidoglycan transglycosylase (242 aa).

The helical transmembrane segment at 19–39 (ILAALAVFWGGGIALFSVVPV) threads the bilayer.

It belongs to the glycosyltransferase 51 family.

The protein resides in the cell inner membrane. It carries out the reaction [GlcNAc-(1-&gt;4)-Mur2Ac(oyl-L-Ala-gamma-D-Glu-L-Lys-D-Ala-D-Ala)](n)-di-trans,octa-cis-undecaprenyl diphosphate + beta-D-GlcNAc-(1-&gt;4)-Mur2Ac(oyl-L-Ala-gamma-D-Glu-L-Lys-D-Ala-D-Ala)-di-trans,octa-cis-undecaprenyl diphosphate = [GlcNAc-(1-&gt;4)-Mur2Ac(oyl-L-Ala-gamma-D-Glu-L-Lys-D-Ala-D-Ala)](n+1)-di-trans,octa-cis-undecaprenyl diphosphate + di-trans,octa-cis-undecaprenyl diphosphate + H(+). The protein operates within cell wall biogenesis; peptidoglycan biosynthesis. Peptidoglycan polymerase that catalyzes glycan chain elongation from lipid-linked precursors. This Salmonella heidelberg (strain SL476) protein is Biosynthetic peptidoglycan transglycosylase.